The chain runs to 117 residues: Large ribosomal subunit protein bL20c (117 aa).

Belongs to the bacterial ribosomal protein bL20 family.

The protein localises to the plastid. It is found in the chloroplast. In terms of biological role, binds directly to 23S ribosomal RNA and is necessary for the in vitro assembly process of the 50S ribosomal subunit. It is not involved in the protein synthesizing functions of that subunit. The polypeptide is Large ribosomal subunit protein bL20c (Olimarabidopsis pumila (Dwarf rocket)).